Consider the following 361-residue polypeptide: Mannose-1-phosphate guanylyltransferase 1 (361 aa).

Residues L6 and V7 each contribute to the GDP-alpha-D-mannose site. Diphosphate contacts are provided by G9, G11, T12, R13, and K23. GDP-alpha-D-mannose-binding residues include G85, N109, D111, G146, and N173.

This sequence belongs to the transferase hexapeptide repeat family. Interacts in vitro with CSN5A and CSN5B, but in planta only with CSN5B, which targets CYT1 for degradation in the dark by the 26S proteasome. Forms homodimers in the unliganded structure. The product-bound structure is composed of six dimers that form a dodecameric assembly.

It localises to the cytoplasm. It is found in the nucleus. It catalyses the reaction alpha-D-mannose 1-phosphate + GTP + H(+) = GDP-alpha-D-mannose + diphosphate. It functions in the pathway nucleotide-sugar biosynthesis; GDP-alpha-D-mannose biosynthesis; GDP-alpha-D-mannose from alpha-D-mannose 1-phosphate (GTP route): step 1/1. Functionally, essential protein during embryogenesis. Catalyzes a reaction of the Smirnoff-Wheeler pathway, the major route to ascorbate biosynthesis in plants. Plays an essential role in plant growth and development and cell-wall architecture. Provides GDP-mannose, used for cell wall carbohydrate biosynthesis, protein N-glycosylation, as well as for the biosynthesis of the antioxidant ascorbate. This Arabidopsis thaliana (Mouse-ear cress) protein is Mannose-1-phosphate guanylyltransferase 1.